The following is a 337-amino-acid chain: 4-hydroxy-3-methylbut-2-enyl diphosphate reductase (337 aa).

Residue cysteine 25 participates in [4Fe-4S] cluster binding. Histidine 54 and histidine 87 together coordinate (2E)-4-hydroxy-3-methylbut-2-enyl diphosphate. Residues histidine 54 and histidine 87 each coordinate dimethylallyl diphosphate. Isopentenyl diphosphate is bound by residues histidine 54 and histidine 87. Cysteine 109 serves as a coordination point for [4Fe-4S] cluster. Histidine 137 contacts (2E)-4-hydroxy-3-methylbut-2-enyl diphosphate. Histidine 137 contributes to the dimethylallyl diphosphate binding site. Residue histidine 137 coordinates isopentenyl diphosphate. Glutamate 139 acts as the Proton donor in catalysis. Threonine 177 provides a ligand contact to (2E)-4-hydroxy-3-methylbut-2-enyl diphosphate. Cysteine 207 is a binding site for [4Fe-4S] cluster. (2E)-4-hydroxy-3-methylbut-2-enyl diphosphate is bound by residues serine 235, serine 236, asparagine 237, and serine 280. Dimethylallyl diphosphate contacts are provided by serine 235, serine 236, asparagine 237, and serine 280. Isopentenyl diphosphate is bound by residues serine 235, serine 236, asparagine 237, and serine 280.

This sequence belongs to the IspH family. It depends on [4Fe-4S] cluster as a cofactor.

It catalyses the reaction isopentenyl diphosphate + 2 oxidized [2Fe-2S]-[ferredoxin] + H2O = (2E)-4-hydroxy-3-methylbut-2-enyl diphosphate + 2 reduced [2Fe-2S]-[ferredoxin] + 2 H(+). The enzyme catalyses dimethylallyl diphosphate + 2 oxidized [2Fe-2S]-[ferredoxin] + H2O = (2E)-4-hydroxy-3-methylbut-2-enyl diphosphate + 2 reduced [2Fe-2S]-[ferredoxin] + 2 H(+). Its pathway is isoprenoid biosynthesis; dimethylallyl diphosphate biosynthesis; dimethylallyl diphosphate from (2E)-4-hydroxy-3-methylbutenyl diphosphate: step 1/1. It participates in isoprenoid biosynthesis; isopentenyl diphosphate biosynthesis via DXP pathway; isopentenyl diphosphate from 1-deoxy-D-xylulose 5-phosphate: step 6/6. Functionally, catalyzes the conversion of 1-hydroxy-2-methyl-2-(E)-butenyl 4-diphosphate (HMBPP) into a mixture of isopentenyl diphosphate (IPP) and dimethylallyl diphosphate (DMAPP). Acts in the terminal step of the DOXP/MEP pathway for isoprenoid precursor biosynthesis. The polypeptide is 4-hydroxy-3-methylbut-2-enyl diphosphate reductase (Leifsonia xyli subsp. xyli (strain CTCB07)).